A 317-amino-acid chain; its full sequence is Acetyl-coenzyme A carboxylase carboxyl transferase subunit alpha (317 aa).

The region spanning Thr-38 to Glu-292 is the CoA carboxyltransferase C-terminal domain.

It belongs to the AccA family. As to quaternary structure, acetyl-CoA carboxylase is a heterohexamer composed of biotin carboxyl carrier protein (AccB), biotin carboxylase (AccC) and two subunits each of ACCase subunit alpha (AccA) and ACCase subunit beta (AccD).

It localises to the cytoplasm. It carries out the reaction N(6)-carboxybiotinyl-L-lysyl-[protein] + acetyl-CoA = N(6)-biotinyl-L-lysyl-[protein] + malonyl-CoA. It functions in the pathway lipid metabolism; malonyl-CoA biosynthesis; malonyl-CoA from acetyl-CoA: step 1/1. In terms of biological role, component of the acetyl coenzyme A carboxylase (ACC) complex. First, biotin carboxylase catalyzes the carboxylation of biotin on its carrier protein (BCCP) and then the CO(2) group is transferred by the carboxyltransferase to acetyl-CoA to form malonyl-CoA. This chain is Acetyl-coenzyme A carboxylase carboxyl transferase subunit alpha, found in Oceanobacillus iheyensis (strain DSM 14371 / CIP 107618 / JCM 11309 / KCTC 3954 / HTE831).